The chain runs to 261 residues: MSKLIPAIKVNNLSFYYDTQKILEGVSMEIYQSKVTAIIGPSGCGKSTFLKCLNRMNELESEVRVEGRVEFFNQNIYERRVNLNRLRRQVSMVHPKPNLFPMSVYDNVAYGVKIVGWRPKLEIDDIVESALKDADLWDEIKHKIHKSALDLSGGQQQRLCIARALAVKPKVLLMDEPCFGLDPIASMKVESLIQSLRLRSELTMVIVSHNLPQISRISDFTAFFKGNESRIGQLVEFGLTKKIFNSPHDSRTREYVLSRLG.

The ABC transporter domain maps to 8–256 (IKVNNLSFYY…PHDSRTREYV (249 aa)). 40 to 47 (GPSGCGKS) provides a ligand contact to ATP.

It belongs to the ABC transporter superfamily. Phosphate importer (TC 3.A.1.7) family. As to quaternary structure, the complex is composed of two ATP-binding proteins (PstB), two transmembrane proteins (PstC and PstA) and a solute-binding protein (PstS).

It localises to the cell inner membrane. It catalyses the reaction phosphate(out) + ATP + H2O = ADP + 2 phosphate(in) + H(+). In terms of biological role, part of the ABC transporter complex PstSACB involved in phosphate import. Responsible for energy coupling to the transport system. This chain is Phosphate import ATP-binding protein PstB 4, found in Trichormus variabilis (strain ATCC 29413 / PCC 7937) (Anabaena variabilis).